The chain runs to 434 residues: UDP-glucose 6-dehydrogenase (434 aa).

Residues 2–19 (NITF…GVMM), V11, D30, K35, T121, and E152 contribute to the NAD(+) site. Residues 148 to 152 (EFLRE), K204, N208, 249 to 253 (FLNAG), and G257 each bind substrate. C260 acts as the Nucleophile in catalysis. Residue K263 coordinates NAD(+). Substrate is bound at residue K321. R328 is an NAD(+) binding site.

This sequence belongs to the UDP-glucose/GDP-mannose dehydrogenase family.

The enzyme catalyses UDP-alpha-D-glucose + 2 NAD(+) + H2O = UDP-alpha-D-glucuronate + 2 NADH + 3 H(+). It participates in nucleotide-sugar biosynthesis; UDP-alpha-D-glucuronate biosynthesis; UDP-alpha-D-glucuronate from UDP-alpha-D-glucose: step 1/1. The chain is UDP-glucose 6-dehydrogenase (udg) from Rickettsia bellii (strain RML369-C).